Reading from the N-terminus, the 741-residue chain is Alpha-1,6-mannosylglycoprotein 6-beta-N-acetylglucosaminyltransferase A (741 aa).

At Met1–Lys13 the chain is on the cytoplasmic side. The chain crosses the membrane as a helical; Signal-anchor for type II membrane protein span at residues Leu14–Leu30. Residues His31–Leu741 lie on the Lumenal side of the membrane. Asn110, Asn115, and Asn118 each carry an N-linked (GlcNAc...) asparagine glycan. Cystine bridges form between Cys145-Cys183, Cys156-Cys196, Cys172-Cys338, Cys372-Cys626, Cys649-Cys724, Cys653-Cys726, Cys660-Cys713, Cys681-Cys702, and Cys737-Cys740. The sufficient for catalytic activity stretch occupies residues Asn213 to Leu741. The interval Lys264 to Lys269 is important for activity in FGF2 release. Asn334 is a glycosylation site (N-linked (GlcNAc...) asparagine). Residue Asp378–Ser379 coordinates substrate. Residues Asn433 and Asn447 are each glycosylated (N-linked (GlcNAc...) asparagine). Glu526 lines the UDP-N-acetyl-alpha-D-glucosamine pocket. A substrate-binding site is contributed by Lys554.

The protein belongs to the glycosyltransferase 18 family. N-glycosylated. Post-translationally, a secreted form is released from the membrane after cleavage by gamma-secretase.

The protein localises to the golgi apparatus membrane. It is found in the secreted. It catalyses the reaction N(4)-{beta-D-GlcNAc-(1-&gt;2)-[beta-D-GlcNAc-(1-&gt;4)]-alpha-D-Man-(1-&gt;3)-[beta-D-GlcNAc-(1-&gt;2)-alpha-D-Man-(1-&gt;6)]-beta-D-Man-(1-&gt;4)-beta-D-GlcNAc-(1-&gt;4)-beta-D-GlcNAc}-L-asparaginyl-[protein] + UDP-N-acetyl-alpha-D-glucosamine = N(4)-{beta-D-GlcNAc-(1-&gt;2)-[beta-D-GlcNAc-(1-&gt;4)]-alpha-D-Man-(1-&gt;3)-[beta-D-GlcNAc-(1-&gt;2)-[beta-D-GlcNAc-(1-&gt;6)]-alpha-D-Man-(1-&gt;6)]-beta-D-Man-(1-&gt;4)-beta-D-GlcNAc-(1-&gt;4)-beta-D-GlcNAc}-L-asparaginyl-[protein] + UDP + H(+). It functions in the pathway protein modification; protein glycosylation. Activity is increased by Mn(2+) and Mg(2+). Its function is as follows. Catalyzes the addition of N-acetylglucosamine (GlcNAc) in beta 1-6 linkage to the alpha-linked mannose of biantennary N-linked oligosaccharides. Catalyzes an important step in the biosynthesis of branched, complex-type N-glycans, such as those found on EGFR, TGFR (TGF-beta receptor) and CDH2. Via its role in the biosynthesis of complex N-glycans, plays an important role in the activation of cellular signaling pathways, reorganization of the actin cytoskeleton, cell-cell adhesion and cell migration. MGAT5-dependent EGFR N-glycosylation enhances the interaction between EGFR and LGALS3 and thereby prevents rapid EGFR endocytosis and prolongs EGFR signaling. Required for efficient interaction between TGFB1 and its receptor. Enhances activation of intracellular signaling pathways by several types of growth factors, including FGF2, PDGF, IGF, TGFB1 and EGF. MGAT5-dependent CDH2 N-glycosylation inhibits CDH2-mediated homotypic cell-cell adhesion and contributes to the regulation of downstream signaling pathways. Promotes cell migration. Contributes to the regulation of the inflammatory response. MGAT5-dependent TCR N-glycosylation enhances the interaction between TCR and LGALS3, limits agonist-induced TCR clustering, and thereby dampens TCR-mediated responses to antigens. Required for normal leukocyte evasation and accumulation at sites of inflammation. Inhibits attachment of monocytes to the vascular endothelium and subsequent monocyte diapedesis. Functionally, promotes proliferation of umbilical vein endothelial cells and angiogenesis, at least in part by promoting the release of the growth factor FGF2 from the extracellular matrix. In Homo sapiens (Human), this protein is Alpha-1,6-mannosylglycoprotein 6-beta-N-acetylglucosaminyltransferase A (MGAT5).